Consider the following 151-residue polypeptide: Ribonuclease H (151 aa).

The region spanning 1 to 143 (MSDVVVIHTD…ADVLATRGLQ (143 aa)) is the RNase H type-1 domain. D10, E49, D71, and D135 together coordinate Mg(2+).

Belongs to the RNase H family. As to quaternary structure, monomer. Mg(2+) is required as a cofactor.

Its subcellular location is the cytoplasm. The catalysed reaction is Endonucleolytic cleavage to 5'-phosphomonoester.. Functionally, endonuclease that specifically degrades the RNA of RNA-DNA hybrids. The chain is Ribonuclease H from Mycolicibacterium gilvum (strain PYR-GCK) (Mycobacterium gilvum (strain PYR-GCK)).